The chain runs to 153 residues: NADPH-dependent 7-cyano-7-deazaguanine reductase (153 aa).

Residues 1 to 22 (MTDNRYDNLGQLGTSTPLPDNP) are disordered. C51 serves as the catalytic Thioimide intermediate. The active-site Proton donor is the D58. Substrate contacts are provided by residues 73–75 (VES) and 92–93 (HE).

This sequence belongs to the GTP cyclohydrolase I family. QueF type 1 subfamily.

It localises to the cytoplasm. The enzyme catalyses 7-aminomethyl-7-carbaguanine + 2 NADP(+) = 7-cyano-7-deazaguanine + 2 NADPH + 3 H(+). It participates in tRNA modification; tRNA-queuosine biosynthesis. Its function is as follows. Catalyzes the NADPH-dependent reduction of 7-cyano-7-deazaguanine (preQ0) to 7-aminomethyl-7-deazaguanine (preQ1). In Maricaulis maris (strain MCS10) (Caulobacter maris), this protein is NADPH-dependent 7-cyano-7-deazaguanine reductase.